Here is an 859-residue protein sequence, read N- to C-terminus: Leucine--tRNA ligase (859 aa).

Positions 42-52 (PYPSGKLHVGH) match the 'HIGH' region motif. A 'KMSKS' region motif is present at residues 611–615 (KMSKS). Position 614 (K614) interacts with ATP.

Belongs to the class-I aminoacyl-tRNA synthetase family.

The protein resides in the cytoplasm. It catalyses the reaction tRNA(Leu) + L-leucine + ATP = L-leucyl-tRNA(Leu) + AMP + diphosphate. The chain is Leucine--tRNA ligase from Fusobacterium nucleatum subsp. nucleatum (strain ATCC 25586 / DSM 15643 / BCRC 10681 / CIP 101130 / JCM 8532 / KCTC 2640 / LMG 13131 / VPI 4355).